A 127-amino-acid polypeptide reads, in one-letter code: uncharacterized protein (127 aa).

3 helical membrane-spanning segments follow: residues 20–42, 54–76, and 91–110; these read NMIW…FMSS, IYFC…IFVY, and WILI…ASFT.

The protein localises to the membrane. It localises to the cytoplasm. This is an uncharacterized protein from Schizosaccharomyces pombe (strain 972 / ATCC 24843) (Fission yeast).